Reading from the N-terminus, the 137-residue chain is Proofreading thioesterase EntH (137 aa).

Catalysis depends on Glu-63, which acts as the Nucleophile or proton acceptor.

Belongs to the thioesterase PaaI family. In terms of assembly, homotetramer. Dimer of dimers. Interacts specifically with the aryl carrier protein (ArCP) domain of EntB.

Its subcellular location is the cytoplasm. The protein operates within siderophore biosynthesis; enterobactin biosynthesis. In terms of biological role, required for optimal enterobactin synthesis. Acts as a proofreading enzyme that prevents EntB misacylation by hydrolyzing the thioester bound existing between EntB and wrongly charged molecules. The polypeptide is Proofreading thioesterase EntH (Salmonella paratyphi B (strain ATCC BAA-1250 / SPB7)).